Reading from the N-terminus, the 384-residue chain is 1-deoxy-D-xylulose 5-phosphate reductoisomerase (384 aa).

Thr-10, Gly-11, Ser-12, Ile-13, Arg-37, Asn-38, and Asn-124 together coordinate NADPH. Residue Lys-125 coordinates 1-deoxy-D-xylulose 5-phosphate. Glu-126 is a binding site for NADPH. Asp-150 contacts Mn(2+). 1-deoxy-D-xylulose 5-phosphate is bound by residues Ser-151, Glu-152, Ser-176, and His-199. Glu-152 contributes to the Mn(2+) binding site. Gly-205 provides a ligand contact to NADPH. 4 residues coordinate 1-deoxy-D-xylulose 5-phosphate: Ser-212, Asn-217, Lys-218, and Glu-221. Glu-221 is a Mn(2+) binding site.

It belongs to the DXR family. Mg(2+) is required as a cofactor. Mn(2+) serves as cofactor.

It catalyses the reaction 2-C-methyl-D-erythritol 4-phosphate + NADP(+) = 1-deoxy-D-xylulose 5-phosphate + NADPH + H(+). Its pathway is isoprenoid biosynthesis; isopentenyl diphosphate biosynthesis via DXP pathway; isopentenyl diphosphate from 1-deoxy-D-xylulose 5-phosphate: step 1/6. Functionally, catalyzes the NADPH-dependent rearrangement and reduction of 1-deoxy-D-xylulose-5-phosphate (DXP) to 2-C-methyl-D-erythritol 4-phosphate (MEP). In Clostridium perfringens (strain SM101 / Type A), this protein is 1-deoxy-D-xylulose 5-phosphate reductoisomerase.